Here is a 230-residue protein sequence, read N- to C-terminus: 7-cyano-7-deazaguanine synthase (230 aa).

Residue 7–17 (CSGGLDSVSLA) coordinates ATP. Zn(2+) is bound by residues cysteine 185, cysteine 193, cysteine 196, and cysteine 199.

The protein belongs to the QueC family. The cofactor is Zn(2+).

The enzyme catalyses 7-carboxy-7-deazaguanine + NH4(+) + ATP = 7-cyano-7-deazaguanine + ADP + phosphate + H2O + H(+). It participates in purine metabolism; 7-cyano-7-deazaguanine biosynthesis. In terms of biological role, catalyzes the ATP-dependent conversion of 7-carboxy-7-deazaguanine (CDG) to 7-cyano-7-deazaguanine (preQ(0)). The protein is 7-cyano-7-deazaguanine synthase of Ruegeria pomeroyi (strain ATCC 700808 / DSM 15171 / DSS-3) (Silicibacter pomeroyi).